A 271-amino-acid chain; its full sequence is Proteasome inhibitor PI31 subunit (271 aa).

A2 is modified (N-acetylalanine). The important for homodimerization and interaction with FBXO7 stretch occupies residues 2–150 (AGLEVLFASA…PIHEQWEKAN (149 aa)). S153 carries the phosphoserine modification. R205 bears the Omega-N-methylarginine mark. At R219 the chain carries Asymmetric dimethylarginine. The segment at 222-271 (IDPSSGLPNRLPPGAVPPGARFDPFGPIGTSPPGPNPDHLPPPGYDDMYL) is disordered. Omega-N-methylarginine is present on R231. Residues 251–265 (TSPPGPNPDHLPPPG) show a composition bias toward pro residues. Phosphoserine is present on S252.

Belongs to the proteasome inhibitor PI31 family. In terms of assembly, monomer and homodimer. Interacts with FBXO7. Interacts with the 20S proteasome.

It is found in the cytoplasm. Its subcellular location is the endoplasmic reticulum. Its function is as follows. Plays an important role in control of proteasome function. Inhibits the hydrolysis of protein and peptide substrates by the 20S proteasome. Also inhibits the activation of the proteasome by the proteasome regulatory proteins PA700 and PA28. The chain is Proteasome inhibitor PI31 subunit (PSMF1) from Homo sapiens (Human).